Consider the following 462-residue polypeptide: Myrosinase-binding protein 1 (462 aa).

Residues 1–23 (MSTGGPQKLEAQGGKEGKEWDDG) are disordered. Jacalin-type lectin domains are found at residues 6-148 (PQKL…YFAP), 157-300 (PNKV…YFAP), and 310-453 (TKKL…HIVP). A compositionally biased stretch (basic and acidic residues) spans 13–23 (GGKEGKEWDDG).

The protein belongs to the jacalin lectin family. As to expression, expressed exclusively in flowers, in male and female organs, petals and pedicels. Not detected in pollen grains or sepals.

The polypeptide is Myrosinase-binding protein 1 (MBP1) (Arabidopsis thaliana (Mouse-ear cress)).